The sequence spans 426 residues: Glutamate-1-semialdehyde 2,1-aminomutase (426 aa).

The residue at position 265 (Lys265) is an N6-(pyridoxal phosphate)lysine.

It belongs to the class-III pyridoxal-phosphate-dependent aminotransferase family. HemL subfamily. In terms of assembly, homodimer. The cofactor is pyridoxal 5'-phosphate.

It is found in the cytoplasm. The catalysed reaction is (S)-4-amino-5-oxopentanoate = 5-aminolevulinate. It participates in porphyrin-containing compound metabolism; protoporphyrin-IX biosynthesis; 5-aminolevulinate from L-glutamyl-tRNA(Glu): step 2/2. In Salmonella enteritidis PT4 (strain P125109), this protein is Glutamate-1-semialdehyde 2,1-aminomutase.